We begin with the raw amino-acid sequence, 78 residues long: UPF0154 protein SSU98_1719 (78 aa).

The chain crosses the membrane as a helical span at residues 3–23 (LGLAILLIVLAFAGGVALGIY).

The protein belongs to the UPF0154 family.

It is found in the cell membrane. In Streptococcus suis (strain 98HAH33), this protein is UPF0154 protein SSU98_1719.